The chain runs to 159 residues: Early E3 18.5 kDa glycoprotein (159 aa).

The signal sequence occupies residues 1-17 (MRYMILGLLALAAVCSA). Topologically, residues 18-123 (AKKVEFKEPA…PPQKCLENTG (106 aa)) are lumenal. Cystine bridges form between Cys-28–Cys-45 and Cys-39–Cys-100. N-linked (GlcNAc...) asparagine; by host glycans are attached at residues Asn-29 and Asn-78. Residues 124-144 (TFCSTALLITALALVCTLLYL) traverse the membrane as a helical segment. At 145-159 (KYKSRRSFIDEKKMP) the chain is on the cytoplasmic side. Residues 156–159 (KKMP) carry the Di-lysine motif motif.

The protein belongs to the adenoviridae E19 family. In terms of processing, both disulfide bonds are absolutely critical for the interaction with MHC antigens. Post-translationally, N-glycosylated; high-mannose.

The protein localises to the host endoplasmic reticulum membrane. Its function is as follows. Binds and retains class I heavy chains in the endoplasmic reticulum during the early period of virus infection, thereby impairing their transport to the cell surface. Also delays the expression of class I alleles that it cannot affect by direct retention. Binds transporters associated with antigen processing (TAP) and acts as a tapasin inhibitor, preventing class I/TAP association. In consequence, infected cells are masked for immune recognition by cytotoxic T-lymphocytes. The protein is Early E3 18.5 kDa glycoprotein of Homo sapiens (Human).